Here is a 474-residue protein sequence, read N- to C-terminus: Nitrosuccinate lyase (474 aa).

The active-site Proton acceptor is serine 295. Lysine 301 and asparagine 303 together coordinate fumarate. Residue arginine 334 is the Proton donor of the active site.

This sequence belongs to the class-II fumarase/aspartase family.

It catalyses the reaction 2-nitrobutanedioate = fumarate + nitrite + H(+). Its function is as follows. Involved in the biosynthesis of desferrioxamine derivatives which have iron-binding properties and may act as siderophores. Catalyzes the formation of nitrous acid from nitrosuccinic acid (2-nitrobutanedioate) by elimination of its nitro group. This Streptomyces davaonensis (strain DSM 101723 / JCM 4913 / KCC S-0913 / 768) protein is Nitrosuccinate lyase.